A 137-amino-acid chain; its full sequence is Gonadotropin subunit beta-1 (137 aa).

The first 24 residues, 1-24 (MYCTHLRMLQLVVMATLWVTPVRA), serve as a signal peptide directing secretion. 5 disulfide bridges follow: cysteine 32–cysteine 78, cysteine 46–cysteine 93, cysteine 55–cysteine 108, cysteine 59–cysteine 110, and cysteine 113–cysteine 120. Asparagine 36 is a glycosylation site (N-linked (GlcNAc...) asparagine).

Belongs to the glycoprotein hormones subunit beta family. Heterodimer of an alpha and a beta chain.

It is found in the secreted. In terms of biological role, involved in gametogenesis and steroidogenesis. The protein is Gonadotropin subunit beta-1 (cgba) of Coregonus autumnalis (Arctic cisco).